The primary structure comprises 439 residues: Glutamate-1-semialdehyde 2,1-aminomutase (439 aa).

K273 bears the N6-(pyridoxal phosphate)lysine mark.

It belongs to the class-III pyridoxal-phosphate-dependent aminotransferase family. HemL subfamily. As to quaternary structure, homodimer. Pyridoxal 5'-phosphate is required as a cofactor.

It localises to the cytoplasm. The catalysed reaction is (S)-4-amino-5-oxopentanoate = 5-aminolevulinate. Its pathway is porphyrin-containing compound metabolism; protoporphyrin-IX biosynthesis; 5-aminolevulinate from L-glutamyl-tRNA(Glu): step 2/2. The protein is Glutamate-1-semialdehyde 2,1-aminomutase of Paenarthrobacter aurescens (strain TC1).